Consider the following 1150-residue polypeptide: Rho-type GTPase-activating protein 1 (1150 aa).

Residues 1–10 show a composition bias toward basic and acidic residues; it reads MSQRDAKKDG. Residues 1–78 are disordered; it reads MSQRDAKKDG…AESRKALPNQ (78 aa). The segment covering 40-62 has biased composition (polar residues); the sequence is TTKNFPHSRHTSTVAGTEGGSSL. 3 consecutive LIM zinc-binding domains span residues 114 to 177, 178 to 238, and 483 to 546; these read KICA…RRLD, LLCA…LFAA, and DLCY…SSNV. Residues 586-683 are disordered; the sequence is SQRKPLSVDP…SHGGSITGKS (98 aa). A compositionally biased stretch (polar residues) spans 598–617; it reads ENVSSTVETAKQAETTASSD. Positions 642–655 are enriched in low complexity; sequence SNETQSSSNSTETS. The residue at position 690 (S690) is a Phosphoserine. Residues 726-759 form a disordered region; that stretch reads AFRHMPSYTDPSYRKNSGAIYDKNDGTQKGLTPK. Residues 837–1038 form the Rho-GAP domain; that stretch reads VPLEILVERN…LLIENFEKFC (202 aa). Disordered stretches follow at residues 1078 to 1097 and 1104 to 1150; these read LDER…RQPI and LTSD…IRDS. Over residues 1088–1097 the composition is skewed to basic residues; the sequence is ASTKRKRQPI. Residues 1104 to 1134 show a composition bias toward polar residues; the sequence is LTSDVPSGSEVADTNSLSSTTKDEASPNSDA.

The protein localises to the cell tip. Its subcellular location is the nucleus. Its function is as follows. GTPase-activating protein for Rho1. Involved in the F-actin patch localization, cell morphogenesis, regulation of septation, and cell wall synthesis. The chain is Rho-type GTPase-activating protein 1 (rga1) from Schizosaccharomyces pombe (strain 972 / ATCC 24843) (Fission yeast).